Here is a 163-residue protein sequence, read N- to C-terminus: MQTAYFSGGCFWCVEAIFQRIVGIIKLTSGYCNGNTSNPTYQDICLGVTGHAEVVKIEFDEFKISFKVLLDIFFEIHNPTTLNQQGNDRGTQYRSAIFYINNKQQLQAINMINLMSDNIVTQVTKLDCFYPAEDYHQNYFNNNLSKPYCQMLIRPKLDKYFSQ.

Cys-10 is a catalytic residue.

This sequence belongs to the MsrA Met sulfoxide reductase family.

The enzyme catalyses L-methionyl-[protein] + [thioredoxin]-disulfide + H2O = L-methionyl-(S)-S-oxide-[protein] + [thioredoxin]-dithiol. The catalysed reaction is [thioredoxin]-disulfide + L-methionine + H2O = L-methionine (S)-S-oxide + [thioredoxin]-dithiol. In terms of biological role, has an important function as a repair enzyme for proteins that have been inactivated by oxidation. Catalyzes the reversible oxidation-reduction of methionine sulfoxide in proteins to methionine. The polypeptide is Peptide methionine sulfoxide reductase MsrA (Vesicomyosocius okutanii subsp. Calyptogena okutanii (strain HA)).